We begin with the raw amino-acid sequence, 260 residues long: G patch domain-containing protein 11 (260 aa).

Residues 25–61 (MLRQIREARRKEEKRQEANLKNRQKSIKEEEQERRDM) are a coiled coil. The disordered stretch occupies residues 33 to 60 (RRKEEKRQEANLKNRQKSIKEEEQERRD). The G-patch domain maps to 69–115 (CENKGFALLQKMGYKSGQALGKSGDGIVEPIPLNVKTGKSGIGHETL). The residue at position 123 (K123) is an N6-acetyllysine. Positions 187 to 212 (WLRPEEETEEETEEEKEQDEDEYKSE) are disordered. The segment covering 192-210 (EETEEETEEEKEQDEDEYK) has biased composition (acidic residues).

The protein belongs to the GPATCH11 family.

It is found in the chromosome. The protein localises to the centromere. It localises to the kinetochore. The polypeptide is G patch domain-containing protein 11 (GPATCH11) (Bos taurus (Bovine)).